We begin with the raw amino-acid sequence, 132 residues long: Glycine cleavage system H protein (132 aa).

A Lipoyl-binding domain is found at 24–106; sequence IATIGLSAHA…YEEGWFIKVR (83 aa). The residue at position 65 (Lys65) is an N6-lipoyllysine.

Belongs to the GcvH family. In terms of assembly, the glycine cleavage system is composed of four proteins: P, T, L and H. (R)-lipoate serves as cofactor.

The glycine cleavage system catalyzes the degradation of glycine. The H protein shuttles the methylamine group of glycine from the P protein to the T protein. This Picosynechococcus sp. (strain ATCC 27264 / PCC 7002 / PR-6) (Agmenellum quadruplicatum) protein is Glycine cleavage system H protein.